The chain runs to 434 residues: Eukaryotic translation initiation factor 3 subunit E (434 aa).

One can recognise a PCI domain in the interval 219 to 392 (FFNHPKGRDL…GHVVMGTQPL (174 aa)).

It belongs to the eIF-3 subunit E family. As to quaternary structure, component of the eukaryotic translation initiation factor 3 (eIF-3) complex. The eIF-3 complex interacts with pix. Interacts with mxt.

Its subcellular location is the cytoplasm. Component of the eukaryotic translation initiation factor 3 (eIF-3) complex, which is involved in protein synthesis of a specialized repertoire of mRNAs and, together with other initiation factors, stimulates binding of mRNA and methionyl-tRNAi to the 40S ribosome. The eIF-3 complex specifically targets and initiates translation of a subset of mRNAs involved in cell proliferation. This is Eukaryotic translation initiation factor 3 subunit E (eIF3-S6) from Drosophila grimshawi (Hawaiian fruit fly).